A 457-amino-acid polypeptide reads, in one-letter code: tRNA-2-methylthio-N(6)-dimethylallyladenosine synthase (457 aa).

Residues 3-120 (KKVYVKTFGC…LPQMIDARRE (118 aa)) enclose the MTTase N-terminal domain. [4Fe-4S] cluster is bound by residues Cys12, Cys49, Cys83, Cys157, Cys161, and Cys164. The 235-residue stretch at 143–377 (RVEGPSAFVS…QATIEENVAR (235 aa)) folds into the Radical SAM core domain. The 68-residue stretch at 380-447 (QSMLGKVERI…PHSLRGELVL (68 aa)) folds into the TRAM domain.

Belongs to the methylthiotransferase family. MiaB subfamily. As to quaternary structure, monomer. Requires [4Fe-4S] cluster as cofactor.

The protein resides in the cytoplasm. It catalyses the reaction N(6)-dimethylallyladenosine(37) in tRNA + (sulfur carrier)-SH + AH2 + 2 S-adenosyl-L-methionine = 2-methylsulfanyl-N(6)-dimethylallyladenosine(37) in tRNA + (sulfur carrier)-H + 5'-deoxyadenosine + L-methionine + A + S-adenosyl-L-homocysteine + 2 H(+). Functionally, catalyzes the methylthiolation of N6-(dimethylallyl)adenosine (i(6)A), leading to the formation of 2-methylthio-N6-(dimethylallyl)adenosine (ms(2)i(6)A) at position 37 in tRNAs that read codons beginning with uridine. The protein is tRNA-2-methylthio-N(6)-dimethylallyladenosine synthase of Burkholderia mallei (strain NCTC 10247).